An 811-amino-acid polypeptide reads, in one-letter code: Probable inorganic carbon transporter subunit DabA (811 aa).

The Zn(2+) site is built by C336, D338, H498, and C513.

Belongs to the inorganic carbon transporter (TC 9.A.2) DabA family. In terms of assembly, forms a complex with DabB. Zn(2+) is required as a cofactor.

It is found in the cell inner membrane. Part of an energy-coupled inorganic carbon pump. The chain is Probable inorganic carbon transporter subunit DabA from Azorhizobium caulinodans (strain ATCC 43989 / DSM 5975 / JCM 20966 / LMG 6465 / NBRC 14845 / NCIMB 13405 / ORS 571).